The sequence spans 1155 residues: DNA-directed RNA polymerase subunit beta (1155 aa).

This sequence belongs to the RNA polymerase beta chain family. The RNAP catalytic core consists of 2 alpha, 1 beta, 1 beta' and 1 omega subunit. When a sigma factor is associated with the core the holoenzyme is formed, which can initiate transcription.

The enzyme catalyses RNA(n) + a ribonucleoside 5'-triphosphate = RNA(n+1) + diphosphate. Its function is as follows. DNA-dependent RNA polymerase catalyzes the transcription of DNA into RNA using the four ribonucleoside triphosphates as substrates. The protein is DNA-directed RNA polymerase subunit beta of Borreliella burgdorferi (strain ZS7) (Borrelia burgdorferi).